Reading from the N-terminus, the 856-residue chain is V-type proton ATPase subunit a (856 aa).

Residues M1 to E409 lie on the Cytoplasmic side of the membrane. A helical membrane pass occupies residues V410–F428. Over G429 to D430 the chain is Vacuolar. Residues F431–W447 form a helical membrane-spanning segment. Topologically, residues E448–A460 are cytoplasmic. A helical transmembrane segment spans residues M461 to S490. Over M491–S544 the chain is Vacuolar. A helical transmembrane segment spans residues Y545–F564. The Cytoplasmic segment spans residues S565–F582. Residues V583 to K603 traverse the membrane as a helical segment. The Vacuolar portion of the chain corresponds to W604–I648. The helical transmembrane segment at L649–L668 threads the bilayer. Topologically, residues R669–T738 are cytoplasmic. Residues V689–A710 form a disordered region. The span at L692–E707 shows a compositional bias: acidic residues. The helical transmembrane segment at I739–Q763 threads the bilayer. Residues Q764–G784 are Vacuolar-facing. A helical transmembrane segment spans residues G785–E823. Over S824–G856 the chain is Cytoplasmic.

It belongs to the V-ATPase 116 kDa subunit family. In terms of assembly, V-ATPase is a heteromultimeric enzyme composed of a peripheral catalytic V1 complex (components A to H) attached to an integral membrane V0 proton pore complex (components: a, c, c', c'', d, e, f and VOA1).

Its subcellular location is the vacuole membrane. Functionally, subunit of the V0 complex of vacuolar(H+)-ATPase (V-ATPase), a multisubunit enzyme composed of a peripheral complex (V1) that hydrolyzes ATP and a membrane integral complex (V0) that translocates protons. V-ATPase is responsible for acidifying and maintaining the pH of intracellular compartments. This chain is V-type proton ATPase subunit a (vph-1), found in Neurospora crassa (strain ATCC 24698 / 74-OR23-1A / CBS 708.71 / DSM 1257 / FGSC 987).